The primary structure comprises 155 residues: Putative methyl-CpG-binding domain protein 12 (155 aa).

The CW-type zinc-finger motif lies at methionine 1–threonine 53. Residues glutamine 3 to cysteine 45 carry the MBD-associated domain (MAD) motif. Residues cysteine 4, cysteine 7, cysteine 33, and cysteine 45 each coordinate Zn(2+). The MBD domain maps to threonine 53–proline 126. The segment at asparagine 130–lysine 155 is disordered. Over residues lysine 133–serine 144 the composition is skewed to basic residues. A Nuclear localization signal motif is present at residues lysine 140–aspartate 147. Basic and acidic residues predominate over residues serine 145 to lysine 155.

The protein localises to the nucleus. Its function is as follows. Probable transcriptional regulator. This is Putative methyl-CpG-binding domain protein 12 (MBD12) from Arabidopsis thaliana (Mouse-ear cress).